Reading from the N-terminus, the 500-residue chain is Protein PIGMENT DEFECTIVE 338, chloroplastic (500 aa).

The transit peptide at 1–63 (MQTLLCQPCK…FAFRGFSICR (63 aa)) directs the protein to the chloroplast. S1 motif domains follow at residues 156 to 265 (KPGD…LSSR), 283 to 351 (NEPI…LSEK), and 362 to 431 (GTLL…LSIA).

Belongs to the bacterial ribosomal protein bS1 family. As to quaternary structure, interacts with CRP1 and PRFB3. As to expression, present in leaves (at protein level). Confined to leaf chlorenchyma cells.

The protein resides in the plastid. It localises to the chloroplast. In terms of biological role, RNA-binding protein that acts as an RNA chaperone to remodel RNA structure and activates their translation. Required for seed pigmentation. Necessary for chloroplast development and subsequent photosynthetic electron flow, as well as for non-photochemical quenching (NPQ). Rubisco regulatory factor which regulates the concerted biogenesis of NDH, PSI (including PsaA, PsaB, PsaD, PsaF, PsaL, PsaG, PsaK and NdhH) and Cytb(6)f (including PetA, PetB, PetC and PetD) complexes. Binds specifically to and involved in the post-transcriptional regulation of plastid-encoded mRNAs (e.g. rbcL, petA, petB, petD and Ycf1), thus modulating expression, cellular localization/compartmentalization, and photosynthetic function. This chain is Protein PIGMENT DEFECTIVE 338, chloroplastic, found in Arabidopsis thaliana (Mouse-ear cress).